A 611-amino-acid polypeptide reads, in one-letter code: Glutamine--fructose-6-phosphate aminotransferase [isomerizing] (611 aa).

C2 (nucleophile; for GATase activity) is an active-site residue. The Glutamine amidotransferase type-2 domain maps to 2–219; sequence CGIVGAVAER…EGDIAEIRRD (218 aa). SIS domains lie at 287–427 and 460–601; these read AADL…VRGT and IAEL…VDQP. Catalysis depends on K606, which acts as the For Fru-6P isomerization activity.

As to quaternary structure, homodimer.

The protein resides in the cytoplasm. It carries out the reaction D-fructose 6-phosphate + L-glutamine = D-glucosamine 6-phosphate + L-glutamate. Functionally, catalyzes the first step in hexosamine metabolism, converting fructose-6P into glucosamine-6P using glutamine as a nitrogen source. The chain is Glutamine--fructose-6-phosphate aminotransferase [isomerizing] from Pseudomonas putida (strain ATCC 47054 / DSM 6125 / CFBP 8728 / NCIMB 11950 / KT2440).